A 201-amino-acid chain; its full sequence is Keratin-associated protein 4-12 (201 aa).

Tandem repeats lie at residues 5–9 (CCGSV), 20–24 (CCRPS), 25–29 (CCQTT), 30–34 (CCRTT), 35–39 (CCRPS), 40–44 (CCVSS), 45–49 (CCRPQ), 50–54 (CCQSV), 55–59 (CCQPT), 60–64 (CCRPS), 65–69 (CCQTT), 70–74 (CCRTT), 75–79 (CCRPS), 80–84 (CCVSS), 85–89 (CCRPQ), 90–94 (CCQSV), 95–99 (CCQPT), 100–104 (CCRPS), 105–109 (CCQTT), 110–114 (CCRTT), 115–119 (CCRPS), 120–124 (CCVSS), 125–129 (CCRPQ), 130–134 (CCQSV), 135–139 (CCQPT), 140–144 (CCRPS), 145–149 (CCISS), 155–159 (CCESS), 160–164 (CCRPC), and 165–169 (CCLRP). Residues 5–169 (CCGSVCSDQG…CCRPCCCLRP (165 aa)) form a 31 X 5 AA repeats of C-C-[GRQVIL]-[SPTR]-[VSTQPC] region.

Belongs to the KRTAP type 4 family. Interacts with hair keratins. Expressed in the hair follicles.

Its function is as follows. In the hair cortex, hair keratin intermediate filaments are embedded in an interfilamentous matrix, consisting of hair keratin-associated proteins (KRTAP), which are essential for the formation of a rigid and resistant hair shaft through their extensive disulfide bond cross-linking with abundant cysteine residues of hair keratins. The matrix proteins include the high-sulfur and high-glycine-tyrosine keratins. This Homo sapiens (Human) protein is Keratin-associated protein 4-12 (KRTAP4-12).